Reading from the N-terminus, the 135-residue chain is Large ribosomal subunit protein uL18 (135 aa).

The tract at residues 1–23 is disordered; that stretch reads MSQTANQKAKRIPLGKDASTKRR.

Belongs to the universal ribosomal protein uL18 family. As to quaternary structure, part of the 50S ribosomal subunit; part of the 5S rRNA/L5/L18/L25 subcomplex. Contacts the 5S and 23S rRNAs.

In terms of biological role, this is one of the proteins that bind and probably mediate the attachment of the 5S RNA into the large ribosomal subunit, where it forms part of the central protuberance. The protein is Large ribosomal subunit protein uL18 of Rhodococcus jostii (strain RHA1).